A 461-amino-acid chain; its full sequence is Serine carboxypeptidase-like 45 (461 aa).

An N-terminal signal peptide occupies residues 1–24 (MSPLQWLTISFALIIFHSLTVSSS). Intrachain disulfides connect cysteine 86-cysteine 340, cysteine 243-cysteine 261, and cysteine 286-cysteine 309. An N-linked (GlcNAc...) asparagine glycan is attached at asparagine 168. The active site involves serine 177. Asparagine 244 carries an N-linked (GlcNAc...) asparagine glycan. Active-site residues include aspartate 377 and histidine 434.

Belongs to the peptidase S10 family. As to expression, ubiquitous.

The protein localises to the secreted. Functionally, probable carboxypeptidase. This Arabidopsis thaliana (Mouse-ear cress) protein is Serine carboxypeptidase-like 45 (SCPL45).